The sequence spans 217 residues: Pyridoxine/pyridoxamine 5'-phosphate oxidase (217 aa).

Residues arginine 14 to tyrosine 17 and lysine 72 contribute to the substrate site. Residues arginine 67 to lysine 72, tyrosine 82 to threonine 83, arginine 88, and lysine 89 contribute to the FMN site. Substrate-binding residues include tyrosine 129, arginine 133, and serine 137. FMN-binding positions include glutamine 146 to serine 147 and tryptophan 190. Arginine 196–histidine 198 lines the substrate pocket. Position 200 (arginine 200) interacts with FMN.

Belongs to the pyridoxamine 5'-phosphate oxidase family. Homodimer. The cofactor is FMN.

It carries out the reaction pyridoxamine 5'-phosphate + O2 + H2O = pyridoxal 5'-phosphate + H2O2 + NH4(+). The enzyme catalyses pyridoxine 5'-phosphate + O2 = pyridoxal 5'-phosphate + H2O2. It functions in the pathway cofactor metabolism; pyridoxal 5'-phosphate salvage; pyridoxal 5'-phosphate from pyridoxamine 5'-phosphate: step 1/1. It participates in cofactor metabolism; pyridoxal 5'-phosphate salvage; pyridoxal 5'-phosphate from pyridoxine 5'-phosphate: step 1/1. Its function is as follows. Catalyzes the oxidation of either pyridoxine 5'-phosphate (PNP) or pyridoxamine 5'-phosphate (PMP) into pyridoxal 5'-phosphate (PLP). The protein is Pyridoxine/pyridoxamine 5'-phosphate oxidase of Acidovorax sp. (strain JS42).